Consider the following 680-residue polypeptide: Lipase 1 (680 aa).

Residues 1–34 form the signal peptide; that stretch reads MKSQNKYSIRKFSVGASSILIATLLFLSGGQAQA. A propeptide spanning residues 35-290 is cleaved from the precursor; the sequence is AEKQVNMGNS…AKAKGDQTNK (256 aa). Disordered regions lie at residues 39 to 58 and 82 to 260; these read VNMGNSQEDTVTAQSIGDQQ and KNLH…KNGL. Residues 40 to 58 show a composition bias toward polar residues; that stretch reads NMGNSQEDTVTAQSIGDQQ. Over residues 84–112 the composition is skewed to basic and acidic residues; sequence LHNDKTISEENHRKTDDLNKDQLKDDKKS. Polar residues-rich tracts occupy residues 162 to 193 and 204 to 223; these read SQDLNANNNLPSQSRTKVSPSLNKSDQTSQRE and QPQQKNQANDKITDHNFNNE. Positions 224-234 are enriched in basic and acidic residues; sequence QEVKPQKDEKT. Residues 235-246 show a composition bias toward polar residues; the sequence is LSVSDLKNNQKS. The active-site Nucleophile is the S408. The active-site Charge relay system is D600. D638 lines the Ca(2+) pocket. H639 (charge relay system) is an active-site residue. Positions 641, 646, and 649 each coordinate Ca(2+).

It belongs to the AB hydrolase superfamily. Lipase family.

Its subcellular location is the secreted. It catalyses the reaction a triacylglycerol + H2O = a diacylglycerol + a fatty acid + H(+). The protein is Lipase 1 (lip1) of Staphylococcus aureus (strain MRSA252).